Reading from the N-terminus, the 285-residue chain is Anamorsin homolog 1 (285 aa).

The segment at 1 to 150 (MEATVLLVTD…QKPTWETGSS (150 aa)) is N-terminal SAM-like domain. A linker region spans residues 150–195 (SFSLKKKSVQKQESLPKPGALSVKPEMNVDLEDLIDEESLLSEEDL). [2Fe-2S] cluster-binding residues include cysteine 206, cysteine 215, cysteine 218, and cysteine 220. The tract at residues 206-220 (CEVSTKRKACKNCTC) is fe-S binding site A. 4 residues coordinate [4Fe-4S] cluster: cysteine 246, cysteine 249, cysteine 257, and cysteine 260. 2 short sequence motifs (cx2C motif) span residues 246-249 (CGNC) and 257-260 (CSSC). Residues 246 to 260 (CGNCGLGDAFRCSSC) form a fe-S binding site B region.

The protein belongs to the anamorsin family. Monomer. [2Fe-2S] cluster is required as a cofactor. [4Fe-4S] cluster serves as cofactor.

It localises to the cytoplasm. The protein resides in the mitochondrion intermembrane space. Functionally, component of the cytosolic iron-sulfur (Fe-S) protein assembly (CIA) machinery. Required for the maturation of extramitochondrial Fe-S proteins. Part of an electron transfer chain functioning in an early step of cytosolic Fe-S biogenesis, facilitating the de novo assembly of a [4Fe-4S] cluster on the cytosolic Fe-S scaffold complex. Electrons are transferred from NADPH via a FAD- and FMN-containing diflavin oxidoreductase. Together with the diflavin oxidoreductase, also required for the assembly of the diferric tyrosyl radical cofactor of ribonucleotide reductase (RNR), probably by providing electrons for reduction during radical cofactor maturation in the catalytic small subunit. The polypeptide is Anamorsin homolog 1 (Picea sitchensis (Sitka spruce)).